We begin with the raw amino-acid sequence, 314 residues long: 4-hydroxy-3-methylbut-2-enyl diphosphate reductase (314 aa).

Cysteine 12 contacts [4Fe-4S] cluster. Residues histidine 41 and histidine 74 each contribute to the (2E)-4-hydroxy-3-methylbut-2-enyl diphosphate site. Dimethylallyl diphosphate is bound by residues histidine 41 and histidine 74. Histidine 41 and histidine 74 together coordinate isopentenyl diphosphate. Cysteine 96 is a binding site for [4Fe-4S] cluster. Histidine 124 contributes to the (2E)-4-hydroxy-3-methylbut-2-enyl diphosphate binding site. Histidine 124 provides a ligand contact to dimethylallyl diphosphate. An isopentenyl diphosphate-binding site is contributed by histidine 124. Glutamate 126 acts as the Proton donor in catalysis. Position 167 (threonine 167) interacts with (2E)-4-hydroxy-3-methylbut-2-enyl diphosphate. Residue cysteine 197 coordinates [4Fe-4S] cluster. Residues serine 225, serine 226, asparagine 227, and serine 269 each coordinate (2E)-4-hydroxy-3-methylbut-2-enyl diphosphate. Dimethylallyl diphosphate contacts are provided by serine 225, serine 226, asparagine 227, and serine 269. Isopentenyl diphosphate is bound by residues serine 225, serine 226, asparagine 227, and serine 269.

Belongs to the IspH family. [4Fe-4S] cluster serves as cofactor.

It catalyses the reaction isopentenyl diphosphate + 2 oxidized [2Fe-2S]-[ferredoxin] + H2O = (2E)-4-hydroxy-3-methylbut-2-enyl diphosphate + 2 reduced [2Fe-2S]-[ferredoxin] + 2 H(+). The catalysed reaction is dimethylallyl diphosphate + 2 oxidized [2Fe-2S]-[ferredoxin] + H2O = (2E)-4-hydroxy-3-methylbut-2-enyl diphosphate + 2 reduced [2Fe-2S]-[ferredoxin] + 2 H(+). It participates in isoprenoid biosynthesis; dimethylallyl diphosphate biosynthesis; dimethylallyl diphosphate from (2E)-4-hydroxy-3-methylbutenyl diphosphate: step 1/1. Its pathway is isoprenoid biosynthesis; isopentenyl diphosphate biosynthesis via DXP pathway; isopentenyl diphosphate from 1-deoxy-D-xylulose 5-phosphate: step 6/6. Its function is as follows. Catalyzes the conversion of 1-hydroxy-2-methyl-2-(E)-butenyl 4-diphosphate (HMBPP) into a mixture of isopentenyl diphosphate (IPP) and dimethylallyl diphosphate (DMAPP). Acts in the terminal step of the DOXP/MEP pathway for isoprenoid precursor biosynthesis. This chain is 4-hydroxy-3-methylbut-2-enyl diphosphate reductase, found in Mannheimia succiniciproducens (strain KCTC 0769BP / MBEL55E).